A 301-amino-acid chain; its full sequence is Glycine--tRNA ligase alpha subunit (301 aa).

This sequence belongs to the class-II aminoacyl-tRNA synthetase family. As to quaternary structure, tetramer of two alpha and two beta subunits.

The protein resides in the cytoplasm. The enzyme catalyses tRNA(Gly) + glycine + ATP = glycyl-tRNA(Gly) + AMP + diphosphate. This is Glycine--tRNA ligase alpha subunit from Bordetella avium (strain 197N).